The primary structure comprises 1535 residues: CLIP-associating protein 1 (1535 aa).

2 HEAT repeats span residues Ala-87–Asn-124 and Leu-163–Glu-200. The segment at Asn-237–Ala-290 is disordered. A Phosphoserine modification is found at Ser-246. Positions Pro-252–Ser-266 are enriched in low complexity. Positions Arg-267–Met-279 are enriched in polar residues. Low complexity predominate over residues Ser-280–Ala-290. HEAT repeat units lie at residues His-405–Thr-440 and His-441–Thr-477. Disordered stretches follow at residues Ser-543–Ser-600 and Ser-612–Pro-782. 5 positions are modified to phosphoserine: Ser-545, Ser-548, Ser-558, Ser-559, and Ser-568. Residues Ser-548–Leu-567 show a composition bias toward low complexity. The span at Ser-579–Ser-594 shows a compositional bias: low complexity. Residue Ser-600 is modified to Phosphoserine. A compositionally biased stretch (low complexity) spans Ser-612–Ser-633. Phosphoserine is present on residues Ser-636, Ser-646, Ser-647, and Ser-649. The segment covering Gln-645–Asp-658 has biased composition (polar residues). Thr-656 carries the phosphothreonine modification. Residues Arg-662–Pro-782 form an interaction with microtubules, MAPRE1 and MAPRE3 region. Positions Arg-673–Ser-695 are enriched in low complexity. A phosphoserine mark is found at Ser-684, Ser-688, Ser-695, and Ser-702. Thr-708 carries the post-translational modification Phosphothreonine. Phosphoserine is present on Ser-711. Residues Gln-721 to Asn-730 are compositionally biased toward polar residues. Ser-784, Ser-794, and Ser-820 each carry phosphoserine. An HEAT 5 repeat occupies Gln-971 to Pro-1008. The interval Leu-1078–Ser-1157 is disordered. The span at Lys-1079–Gly-1094 shows a compositional bias: polar residues. The residue at position 1088 (Ser-1088) is a Phosphoserine. 2 positions are modified to phosphothreonine: Thr-1092 and Thr-1096. Low complexity predominate over residues Ser-1103–Thr-1112. Residues Ser-1110, Phe-1139, and Ser-1193 each carry the phosphoserine modification. Residues Pro-1200–Ser-1213 are compositionally biased toward basic and acidic residues. 2 disordered regions span residues Pro-1200–Gly-1233 and Leu-1245–Tyr-1266. The residue at position 1220 (Ser-1220) is a Phosphoserine. An interaction with CLIP2 and RSN region spans residues Arg-1251–Ser-1535. Positions Arg-1251 to Ser-1535 are interaction with PHLDB2. Residues Phe-1253–Ser-1535 form a localization to kinetochores region. Residues Asp-1296–Lys-1327 adopt a coiled-coil conformation. HEAT repeat units follow at residues Glu-1339–Ala-1376 and Gln-1457–Glu-1494.

It belongs to the CLASP family. In terms of assembly, interacts with ERC1, MAPRE1, MAPRE3, microtubules, and PHLDB2. The interaction with ERC1 may be mediated by PHLDB2. Interacts with GCC2; recruits CLASP1 to Golgi membranes. Interacts with CLIP2 and RSN. Interacts with MACF1. Interacts with mtcl2 and MTCL1. As to expression, highly expressed in brain and heart and at lower levels in kidney, lung, skeletal muscle and testis.

The protein resides in the cytoplasm. It is found in the cytoskeleton. The protein localises to the microtubule organizing center. Its subcellular location is the centrosome. It localises to the chromosome. The protein resides in the centromere. It is found in the kinetochore. The protein localises to the spindle. Its subcellular location is the golgi apparatus. It localises to the trans-Golgi network. Its function is as follows. Microtubule plus-end tracking protein that promotes the stabilization of dynamic microtubules. Involved in the nucleation of noncentrosomal microtubules originating from the trans-Golgi network (TGN). Required for the polarization of the cytoplasmic microtubule arrays in migrating cells towards the leading edge of the cell. May act at the cell cortex to enhance the frequency of rescue of depolymerizing microtubules by attaching their plus-ends to cortical platforms composed of ERC1 and PHLDB2. This cortical microtubule stabilizing activity is regulated at least in part by phosphatidylinositol 3-kinase signaling. Also performs a similar stabilizing function at the kinetochore which is essential for the bipolar alignment of chromosomes on the mitotic spindle. The protein is CLIP-associating protein 1 (Clasp1) of Mus musculus (Mouse).